The following is a 345-amino-acid chain: Dihydroorotase (345 aa).

Residues histidine 13 and histidine 15 each contribute to the Zn(2+) site. Residues histidine 15–arginine 17 and asparagine 41 contribute to the substrate site. Zn(2+) contacts are provided by lysine 100, histidine 137, and histidine 175. Position 100 is an N6-carboxylysine (lysine 100). Histidine 137 is a binding site for substrate. Leucine 220 provides a ligand contact to substrate. Aspartate 248 contacts Zn(2+). Aspartate 248 is an active-site residue. Histidine 252 and alanine 264 together coordinate substrate.

The protein belongs to the metallo-dependent hydrolases superfamily. DHOase family. Class II DHOase subfamily. Homodimer. It depends on Zn(2+) as a cofactor.

It carries out the reaction (S)-dihydroorotate + H2O = N-carbamoyl-L-aspartate + H(+). It functions in the pathway pyrimidine metabolism; UMP biosynthesis via de novo pathway; (S)-dihydroorotate from bicarbonate: step 3/3. Its function is as follows. Catalyzes the reversible cyclization of carbamoyl aspartate to dihydroorotate. The polypeptide is Dihydroorotase (Laribacter hongkongensis (strain HLHK9)).